The following is a 71-amino-acid chain: Conotoxin Pl071 (71 aa).

An N-terminal signal peptide occupies residues 1 to 20; that stretch reads MSRLFMILLVICVITLGTDA. A propeptide spanning residues 21 to 31 is cleaved from the precursor; sequence SQAEDSGTEKR. Y69 carries the post-translational modification Tyrosine amide.

Belongs to the conotoxin NSf-1 superfamily. Expressed by the venom duct.

The protein resides in the secreted. Functionally, probable neurotoxin with unknown target. Possibly targets ion channels. This Conus planorbis (Planorbis cone) protein is Conotoxin Pl071.